A 151-amino-acid chain; its full sequence is Ubiquitin-conjugating enzyme E2 2 (151 aa).

The disordered stretch occupies residues 1-26 (MSTSARRRLMRDFKRMQTDPPAGVSA). In terms of domain architecture, UBC core spans 4 to 150 (SARRRLMRDF…VRETVEKSWE (147 aa)). The Glycyl thioester intermediate role is filled by Cys-88.

This sequence belongs to the ubiquitin-conjugating enzyme family.

It localises to the cytoplasm. It is found in the nucleus. It catalyses the reaction S-ubiquitinyl-[E1 ubiquitin-activating enzyme]-L-cysteine + [E2 ubiquitin-conjugating enzyme]-L-cysteine = [E1 ubiquitin-activating enzyme]-L-cysteine + S-ubiquitinyl-[E2 ubiquitin-conjugating enzyme]-L-cysteine.. Its pathway is protein modification; protein ubiquitination. Catalyzes the covalent attachment of ubiquitin to other proteins. Plays a role in transcription regulation by catalyzing the monoubiquitination of histone H2B to form H2BK123ub1. H2BK123ub1 gives a specific tag for epigenetic transcriptional activation and is also a prerequisite for H3K4me and H3K79me formation. Also involved in postreplication repair of UV-damaged DNA, in N-end rule-dependent protein degradation and in sporulation. The sequence is that of Ubiquitin-conjugating enzyme E2 2 (ubc2) from Aspergillus fumigatus (strain ATCC MYA-4609 / CBS 101355 / FGSC A1100 / Af293) (Neosartorya fumigata).